Here is a 710-residue protein sequence, read N- to C-terminus: Polyribonucleotide nucleotidyltransferase (710 aa).

The Mg(2+) site is built by aspartate 489 and aspartate 495. Positions 556–615 constitute a KH domain; the sequence is PKIDTIKIDVDKIKVVIGKGGETIDKIIAETGVKIDIDDEGNVSIYSSDQAAINRTKEII. An S1 motif domain is found at 625-693; the sequence is GEVYHAKVVR…EKGRVDASMK (69 aa). The tract at residues 691 to 710 is disordered; that stretch reads SMKALIPRPPKPEKKEEKHD. Residues 700-710 show a composition bias toward basic and acidic residues; sequence PKPEKKEEKHD.

This sequence belongs to the polyribonucleotide nucleotidyltransferase family. Mg(2+) serves as cofactor.

Its subcellular location is the cytoplasm. It carries out the reaction RNA(n+1) + phosphate = RNA(n) + a ribonucleoside 5'-diphosphate. Functionally, involved in mRNA degradation. Catalyzes the phosphorolysis of single-stranded polyribonucleotides processively in the 3'- to 5'-direction. This is Polyribonucleotide nucleotidyltransferase from Streptococcus pyogenes serotype M2 (strain MGAS10270).